Here is a 90-residue protein sequence, read N- to C-terminus: Large ribosomal subunit protein eL34 (90 aa).

Residues Cys36, Cys39, Cys72, and Cys75 each contribute to the Zn(2+) site. The tract at residues 41 to 72 (RPLNGVPRGRPSELRKLPKTKKRPERPYPNLC) is disordered.

It belongs to the eukaryotic ribosomal protein eL34 family. As to quaternary structure, part of the 50S ribosomal subunit. Zn(2+) serves as cofactor.

The protein is Large ribosomal subunit protein eL34 of Thermococcus kodakarensis (strain ATCC BAA-918 / JCM 12380 / KOD1) (Pyrococcus kodakaraensis (strain KOD1)).